Here is a 241-residue protein sequence, read N- to C-terminus: Uridylate kinase (241 aa).

Residues 15–18 (KLSG), G58, and R62 each bind ATP. Residues D77 and 138–145 (TGNPYFTT) contribute to the UMP site. T165, Y171, and D174 together coordinate ATP.

It belongs to the UMP kinase family. As to quaternary structure, homohexamer.

It localises to the cytoplasm. The catalysed reaction is UMP + ATP = UDP + ADP. The protein operates within pyrimidine metabolism; CTP biosynthesis via de novo pathway; UDP from UMP (UMPK route): step 1/1. Its activity is regulated as follows. Inhibited by UTP. Its function is as follows. Catalyzes the reversible phosphorylation of UMP to UDP. The protein is Uridylate kinase of Desulfotalea psychrophila (strain LSv54 / DSM 12343).